Consider the following 171-residue polypeptide: MTGIGEQSIAEQVRSLLEPVLERDGYELVEVEWARLAGRWTLRVFIDKAGGVGIDDCQAVSKTVEPILDVADFIEPAYDLEVSSPGLDRPLRKPRDFDRYAGQRVHVKAYGPVAGTAPGSPARKHWTGVLKGFRDGAVELDVDGALHRVPHDQIAKANLEYDVEGDLRRKD.

This sequence belongs to the RimP family.

The protein localises to the cytoplasm. Functionally, required for maturation of 30S ribosomal subunits. The chain is Ribosome maturation factor RimP from Anaeromyxobacter dehalogenans (strain 2CP-C).